Here is a 234-residue protein sequence, read N- to C-terminus: ATP-dependent dethiobiotin synthetase BioD (234 aa).

Position 12 to 17 (12 to 17) interacts with ATP; it reads DVGKTF. Thr-16 contributes to the Mg(2+) binding site. The active site involves Lys-37. Thr-41 lines the substrate pocket. ATP is bound by residues Asp-54 and 115-118; that span reads EGAG. Mg(2+)-binding residues include Asp-54 and Glu-115.

The protein belongs to the dethiobiotin synthetase family. Homodimer. Mg(2+) serves as cofactor.

Its subcellular location is the cytoplasm. It carries out the reaction (7R,8S)-7,8-diammoniononanoate + CO2 + ATP = (4R,5S)-dethiobiotin + ADP + phosphate + 3 H(+). The protein operates within cofactor biosynthesis; biotin biosynthesis; biotin from 7,8-diaminononanoate: step 1/2. Catalyzes a mechanistically unusual reaction, the ATP-dependent insertion of CO2 between the N7 and N8 nitrogen atoms of 7,8-diaminopelargonic acid (DAPA, also called 7,8-diammoniononanoate) to form a ureido ring. This is ATP-dependent dethiobiotin synthetase BioD from Lysinibacillus sphaericus (Bacillus sphaericus).